Consider the following 235-residue polypeptide: (5-formylfuran-3-yl)methyl phosphate synthase (235 aa).

The Schiff-base intermediate with substrate role is filled by Lys-27. Catalysis depends on Lys-85, which acts as the Proton acceptor.

The protein belongs to the MfnB family. Homohexamer. Trimer of dimers.

It catalyses the reaction 2 D-glyceraldehyde 3-phosphate = 4-(hydroxymethyl)-2-furancarboxaldehyde phosphate + phosphate + 2 H2O. It participates in cofactor biosynthesis; methanofuran biosynthesis. Functionally, catalyzes the formation of 4-(hydroxymethyl)-2-furancarboxaldehyde phosphate (4-HFC-P) from two molecules of glyceraldehyde-3-P (GA-3-P). The protein is (5-formylfuran-3-yl)methyl phosphate synthase of Methanocaldococcus jannaschii (strain ATCC 43067 / DSM 2661 / JAL-1 / JCM 10045 / NBRC 100440) (Methanococcus jannaschii).